The chain runs to 190 residues: Adenylate kinase (190 aa).

ATP is bound at residue 11–16 (GSGKGT). Positions 31–60 (STGDVLRGEMKAETELGKIAKDYIEKGQLV) are NMP. AMP is bound by residues T32, R37, 58–60 (QLV), 86–89 (GFPR), and Q93. The LID stretch occupies residues 127–137 (ERGKVSGRSDD). R128 serves as a coordination point for ATP. AMP-binding residues include R134 and R145. G173 serves as a coordination point for ATP.

The protein belongs to the adenylate kinase family. Monomer.

The protein resides in the cytoplasm. It catalyses the reaction AMP + ATP = 2 ADP. The protein operates within purine metabolism; AMP biosynthesis via salvage pathway; AMP from ADP: step 1/1. In terms of biological role, catalyzes the reversible transfer of the terminal phosphate group between ATP and AMP. Plays an important role in cellular energy homeostasis and in adenine nucleotide metabolism. In Parabacteroides distasonis (strain ATCC 8503 / DSM 20701 / CIP 104284 / JCM 5825 / NCTC 11152), this protein is Adenylate kinase.